Here is a 677-residue protein sequence, read N- to C-terminus: MDRPDEGPPAKTPRLSSSEPRQRDLPPPPPPPLQRLPLPPPQQRPRPQEETEAAQVLADMRGVGPTLPPPLPYVILEEGGIRAYFTLSAESPGWDHAMESGFGEAPSTGIMETLPSSEISGGSLAIDFQVAEPSSLGEKALETCSLGGWGPQMLVGPKRKEEAIIIVEDEDEDDKESVRRRQRRRRRRRKQRKAKESRERSAQRMESILQALESIQMDLEAVNIKAGKAFLRLKRKFIQMRRPFLERRDLIIQHIPGFWVKAFLNHPRISILINQRDRDIFRYLTNLQVQDLRHISMGYKMKLYFQTNPYFTNMVIVKEFQRNRSGRLVSHSTPIRWHRGQEPQAYNRRSHDTRESFFNWFSNHSLPEADRIAEIIKNDLWVNPVRYYMRRGGYRSSRKKQHGKERAKNQYEMVIMEDAHDHYAIEDILSDISEIDEITDNETIHDIKISDFMETTDYFETTDNEVTDANENLCDSENPDHSEGYNTKITDNKGSVAANPDDNSDDPEEKNTYDSEDSNSEKADGDNTTLRDNQQVTNIQDSSDSDNGDEGSDDEDDDGNEGDNEGSDDDDDDNEGSDDDDRDIRYYKNGPEVFDKALDNRTNQNDYEEEVELISEDSVEEEEETSEEASQLSEDSYEDERIYGEERSEVNSEDSDIQEVLPVPKAWASLGKKGKIG.

Residues 1 to 54 (MDRPDEGPPAKTPRLSSSEPRQRDLPPPPPPPLQRLPLPPPQQRPRPQEETEAA) form a disordered region. Lys11 participates in a covalent cross-link: Glycyl lysine isopeptide (Lys-Gly) (interchain with G-Cter in SUMO2). At Ser18 the chain carries Phosphoserine. Residues 25–44 (LPPPPPPPLQRLPLPPPQQR) show a composition bias toward pro residues. Residues Lys158 and Lys160 each participate in a glycyl lysine isopeptide (Lys-Gly) (interchain with G-Cter in SUMO2) cross-link. The tract at residues 175-202 (KESVRRRQRRRRRRRKQRKAKESRERSA) is disordered. The segment covering 178–193 (VRRRQRRRRRRRKQRK) has biased composition (basic residues). Thr333 bears the Phosphothreonine mark. The segment at 469–658 (ANENLCDSEN…EVNSEDSDIQ (190 aa)) is disordered. The span at 484 to 493 (GYNTKITDNK) shows a compositional bias: polar residues. Over residues 509 to 525 (EKNTYDSEDSNSEKADG) the composition is skewed to basic and acidic residues. Residues 526–540 (DNTTLRDNQQVTNIQ) are compositionally biased toward polar residues. Composition is skewed to acidic residues over residues 543–581 (SDSD…DDDD) and 606–627 (DYEE…ETSE). Positions 639 to 650 (DERIYGEERSEV) are enriched in basic and acidic residues. A phosphoserine mark is found at Ser648, Ser652, and Ser655.

It belongs to the nucleosome assembly protein (NAP) family. In terms of assembly, interacts with histones. Interacts with CASK. Part of a complex containing CASK, TBR1 and TSPYL2. Phosphorylation at Thr-333 impairs function on cell proliferation. Present at high levels in the pituitary gland and at moderate levels in adrenal gland, brain, testis and ovary. In brain, expressed both in mature neurons and progenitor cells (at protein level).

The protein resides in the nucleus. The protein localises to the cytoplasm. In terms of biological role, part of the CASK/TBR1/TSPYL2 transcriptional complex which modulates gene expression in response to neuronal synaptic activity, probably by facilitating nucleosome assembly. May inhibit cell proliferation by inducing p53-dependent CDKN1A expression. The chain is Testis-specific Y-encoded-like protein 2 (Tspyl2) from Mus musculus (Mouse).